A 565-amino-acid chain; its full sequence is Adenine deaminase (565 aa).

It belongs to the metallo-dependent hydrolases superfamily. Adenine deaminase family. The cofactor is Mn(2+).

It catalyses the reaction adenine + H2O + H(+) = hypoxanthine + NH4(+). The polypeptide is Adenine deaminase (Cereibacter sphaeroides (strain ATCC 17025 / ATH 2.4.3) (Rhodobacter sphaeroides)).